Reading from the N-terminus, the 297-residue chain is Protein MIZU-KUSSEI 1 (297 aa).

In terms of tissue distribution, expressed in root meristematic region, cortical cells, lateral root cap cells, columella cells of the root cap, mature region of the roots and leaf hydathodes.

Its subcellular location is the endoplasmic reticulum membrane. Its function is as follows. Plays a role in lateral root development by maintaining auxin levels. This function requires GNOM (GN/MIZ2) activity. Negatively regulates cytokinin sensitivity on root development. Positively regulates hydrotropism in roots. The chain is Protein MIZU-KUSSEI 1 (MIZ1) from Arabidopsis thaliana (Mouse-ear cress).